We begin with the raw amino-acid sequence, 397 residues long: Na(+)/H(+) antiporter NhaA 3 (397 aa).

11 consecutive transmembrane segments (helical) span residues 18–38 (AGGI…NSPF), 63–83 (LLLW…GLEL), 98–118 (IALP…IYWW), 129–149 (GWAI…ALLG), 158–178 (IFLT…IAFF), 181–201 (SKIS…LFIC), 207–224 (TTLR…VALL), 269–289 (VAFL…FIGM), 306–326 (LFFG…LFGW), 340–360 (GVAV…SLAF), and 373–393 (LGIV…LRSA).

Belongs to the NhaA Na(+)/H(+) (TC 2.A.33) antiporter family.

The protein localises to the cell inner membrane. The enzyme catalyses Na(+)(in) + 2 H(+)(out) = Na(+)(out) + 2 H(+)(in). Functionally, na(+)/H(+) antiporter that extrudes sodium in exchange for external protons. The polypeptide is Na(+)/H(+) antiporter NhaA 3 (Saccharophagus degradans (strain 2-40 / ATCC 43961 / DSM 17024)).